A 147-amino-acid chain; its full sequence is Protein phosphatase 1 regulatory subunit 14A (147 aa).

Positions 1 to 11 are enriched in basic residues; that stretch reads MAAQRLGKRVL. Residues 1-37 form a disordered region; sequence MAAQRLGKRVLSKLQSPSRARGPGGSPGGLQKRHARV. S26 carries the post-translational modification Phosphoserine. The segment at 35–120 is inhibitory; the sequence is ARVTVKYDRR…LLAKLQGLHR (86 aa). The residue at position 38 (T38) is a Phosphothreonine; by PKC. The segment at 118 to 147 is disordered; that stretch reads LHRQPGLRQPSPSHDGSLSPLQDRARTAHP. Residues 127–137 show a composition bias toward polar residues; it reads PSPSHDGSLSP. S128, S134, and S136 each carry phosphoserine.

It belongs to the PP1 inhibitor family. As to expression, isoform 1 is detected in aorta and testis. Isoform 2 is detected in aorta.

It is found in the cytoplasm. In terms of biological role, inhibitor of PPP1CA. Has over 1000-fold higher inhibitory activity when phosphorylated, creating a molecular switch for regulating the phosphorylation status of PPP1CA substrates and smooth muscle contraction. In Homo sapiens (Human), this protein is Protein phosphatase 1 regulatory subunit 14A (PPP1R14A).